A 53-amino-acid polypeptide reads, in one-letter code: Beta-defensin C7 (53 aa).

3 disulfide bridges follow: Cys20–Cys49, Cys27–Cys42, and Cys32–Cys50.

The protein belongs to the beta-defensin family.

It is found in the secreted. Its function is as follows. Has bactericidal activity. The chain is Beta-defensin C7 from Bos taurus (Bovine).